The sequence spans 213 residues: Thymidylate kinase (213 aa).

Residue 10 to 17 coordinates ATP; it reads GLEGAGKT.

It belongs to the thymidylate kinase family.

The enzyme catalyses dTMP + ATP = dTDP + ADP. In terms of biological role, phosphorylation of dTMP to form dTDP in both de novo and salvage pathways of dTTP synthesis. The sequence is that of Thymidylate kinase from Salmonella dublin (strain CT_02021853).